Consider the following 962-residue polypeptide: Glycine dehydrogenase (decarboxylating) (962 aa).

Lysine 709 is subject to N6-(pyridoxal phosphate)lysine.

It belongs to the GcvP family. The glycine cleavage system is composed of four proteins: P, T, L and H. It depends on pyridoxal 5'-phosphate as a cofactor.

It catalyses the reaction N(6)-[(R)-lipoyl]-L-lysyl-[glycine-cleavage complex H protein] + glycine + H(+) = N(6)-[(R)-S(8)-aminomethyldihydrolipoyl]-L-lysyl-[glycine-cleavage complex H protein] + CO2. In terms of biological role, the glycine cleavage system catalyzes the degradation of glycine. The P protein binds the alpha-amino group of glycine through its pyridoxal phosphate cofactor; CO(2) is released and the remaining methylamine moiety is then transferred to the lipoamide cofactor of the H protein. The sequence is that of Glycine dehydrogenase (decarboxylating) from Shewanella frigidimarina (strain NCIMB 400).